A 215-amino-acid chain; its full sequence is Adenylate kinase (215 aa).

10-15 (GAGKGT) contacts ATP. Residues 30-59 (STGDMLRAAVKAGTELGLKAKSVMDSGGLV) form an NMP region. AMP contacts are provided by residues Thr31, Arg36, 57-59 (GLV), 85-88 (GFPR), and Gln92. The segment at 122–159 (GRRVHEASGRVYHTVYNPPKIAGKDDITGEDLVQRKDD) is LID. ATP is bound by residues Arg123 and 132–133 (VY). Residues Arg156 and Arg167 each coordinate AMP. Position 201 (Gly201) interacts with ATP.

This sequence belongs to the adenylate kinase family. In terms of assembly, monomer.

Its subcellular location is the cytoplasm. The enzyme catalyses AMP + ATP = 2 ADP. Its pathway is purine metabolism; AMP biosynthesis via salvage pathway; AMP from ADP: step 1/1. In terms of biological role, catalyzes the reversible transfer of the terminal phosphate group between ATP and AMP. Plays an important role in cellular energy homeostasis and in adenine nucleotide metabolism. This is Adenylate kinase from Pseudomonas fluorescens (strain ATCC BAA-477 / NRRL B-23932 / Pf-5).